The primary structure comprises 207 residues: Large ribosomal subunit protein uL4 (207 aa).

The segment at 49 to 78 (HAVKNRSAVSGGGRKPWRQKGTGRARQGSI) is disordered.

It belongs to the universal ribosomal protein uL4 family. Part of the 50S ribosomal subunit.

Functionally, one of the primary rRNA binding proteins, this protein initially binds near the 5'-end of the 23S rRNA. It is important during the early stages of 50S assembly. It makes multiple contacts with different domains of the 23S rRNA in the assembled 50S subunit and ribosome. In terms of biological role, forms part of the polypeptide exit tunnel. The chain is Large ribosomal subunit protein uL4 from Streptococcus pneumoniae serotype 19F (strain G54).